The sequence spans 552 residues: Hyaluronan synthase 2 (552 aa).

Residues 1 to 11 (MHCERFLCVLR) lie on the Cytoplasmic side of the membrane. Residues 12–32 (IIGTTLFGVSLLLGITAAYIV) traverse the membrane as a helical segment. The Extracellular segment spans residues 33-45 (GYQFIQTDNYYFS). A helical membrane pass occupies residues 46-66 (FGLYGAFLASHLIIQSLFAFL). Residues 67 to 374 (EHRKMKKSLE…NAMWFHKHHL (308 aa)) are Cytoplasmic-facing. Thr110 carries the post-translational modification Phosphothreonine. Lys190 is covalently cross-linked (Glycyl lysine isopeptide (Lys-Gly) (interchain with G-Cter in ubiquitin)). Residue Ser221 is glycosylated (O-linked (GlcNAc) serine). Phosphothreonine is present on Thr328. The helical transmembrane segment at 375–395 (WMTYEAVITGFFPFFLIATVI) threads the bilayer. Residues 396–402 (QLFYRGK) are Extracellular-facing. Residues 403–423 (IWNILLFLLTVQLVGLIKSSF) traverse the membrane as a helical segment. Over 424–429 (ASCLRG) the chain is Cytoplasmic. Residues 430-450 (NIVMVFMSLYSVLYMSSLLPA) traverse the membrane as a helical segment. At 451–475 (KMFAIATINKAGWGTSGRKTIVVNF) the chain is on the extracellular side. The chain crosses the membrane as a helical span at residues 476–496 (IGLIPVSVWFTILLGGVIFTI). At 497-510 (YKESKKPFSESKQT) the chain is on the cytoplasmic side. A helical membrane pass occupies residues 511-531 (VLIVGTLIYACYWVVLLTLYV). Topologically, residues 532 to 552 (VLINKCGRRKKGQQYDMVLDV) are extracellular.

It belongs to the NodC/HAS family. Homodimer; dimerization promotes enzymatic activity. Forms heterodimer with HAS3. Forms heterodimer with HAS1. Requires Mg(2+) as cofactor. In terms of processing, phosphorylation at Thr-328 is essential for hyaluronan synthase activity. O-GlcNAcylation at Ser-221 increases the stability of HAS2 and plasma membrane localization. Post-translationally, ubiquitination at Lys-190; this ubiquitination is essential for hyaluronan synthase activity and homo- or hetero-oligomerization. Can also be poly-ubiquitinated. Deubiquitinated by USP17L22/USP17 and USP4. USP17L22/USP17 efficiently removes 'Lys-63'- and 'Lys-48'-linked polyubiquitin chains, whereas USP4 preferentially removes monoubiquitination and, partially, both 'Lys-63'- and 'Lys-48'-linked polyubiquitin chain.

It is found in the cell membrane. Its subcellular location is the endoplasmic reticulum membrane. The protein localises to the vesicle. It localises to the golgi apparatus membrane. The protein resides in the lysosome. It carries out the reaction [hyaluronan](n) + UDP-N-acetyl-alpha-D-glucosamine = N-acetyl-beta-D-glucosaminyl-(1-&gt;4)-[hyaluronan](n) + UDP + H(+). The catalysed reaction is N-acetyl-beta-D-glucosaminyl-(1-&gt;4)-[hyaluronan](n) + UDP-alpha-D-glucuronate = [hyaluronan](n+1) + UDP + H(+). It functions in the pathway glycan biosynthesis; hyaluronan biosynthesis. In terms of biological role, catalyzes the addition of GlcNAc or GlcUA monosaccharides to the nascent hyaluronan polymer. Therefore, it is essential to hyaluronan synthesis a major component of most extracellular matrices that has a structural role in tissues architectures and regulates cell adhesion, migration and differentiation. This is one of three isoenzymes responsible for cellular hyaluronan synthesis and it is particularly responsible for the synthesis of high molecular mass hyaluronan. This Rattus norvegicus (Rat) protein is Hyaluronan synthase 2 (Has2).